The sequence spans 381 residues: Translation initiation factor eIF2B subunit beta (381 aa).

The disordered stretch occupies residues 125–148 (LQKPEQPHQNRKNSSGSSSMKTKT). Over residues 136 to 145 (KNSSGSSSMK) the composition is skewed to polar residues.

The protein belongs to the eIF-2B alpha/beta/delta subunits family. Component of the translation initiation factor 2B (eIF2B) complex which is a heterodecamer of two sets of five different subunits: alpha, beta, gamma, delta and epsilon. Subunits alpha, beta and delta comprise a regulatory subcomplex and subunits epsilon and gamma comprise a catalytic subcomplex. Within the complex, the hexameric regulatory complex resides at the center, with the two heterodimeric catalytic subcomplexes bound on opposite sides.

The protein resides in the cytoplasm. It localises to the cytosol. Its function is as follows. Acts as a component of the translation initiation factor 2B (eIF2B) complex, which catalyzes the exchange of GDP for GTP on the eukaryotic initiation factor 2 (eIF2) complex gamma subunit. Its guanine nucleotide exchange factor activity is repressed when bound to eIF2 complex phosphorylated on the alpha subunit, thereby limiting the amount of methionyl-initiator methionine tRNA available to the ribosome and consequently global translation is repressed. It activates the synthesis of GCN4 in yeast under amino acid starvation conditions by suppressing the inhibitory effects of multiple AUG codons present in the leader of GCN4 mRNA. It may promote either repression or activation of GCN4 expression depending on amino acid availability. GCD6 and GCD7 repress GCN4 expression at the translational level by ensuring that ribosomes which have translated UORF1 will reinitiate at UORF2, -3, or -4 and thus fail to reach the GCN4 start site. The sequence is that of Translation initiation factor eIF2B subunit beta (GCD7) from Saccharomyces cerevisiae (strain ATCC 204508 / S288c) (Baker's yeast).